The following is a 236-amino-acid chain: Probable chemoreceptor glutamine deamidase CheD (236 aa).

Residues 1–20 form a disordered region; it reads MIEFGKRATPQSAADAVRGD.

This sequence belongs to the CheD family.

It catalyses the reaction L-glutaminyl-[protein] + H2O = L-glutamyl-[protein] + NH4(+). Its function is as follows. Probably deamidates glutamine residues to glutamate on methyl-accepting chemotaxis receptors (MCPs), playing an important role in chemotaxis. This Ralstonia pickettii (strain 12J) protein is Probable chemoreceptor glutamine deamidase CheD.